Here is a 298-residue protein sequence, read N- to C-terminus: Small ribosomal subunit biogenesis GTPase RsgA 1 (298 aa).

Residues glutamine 63–tyrosine 224 enclose the CP-type G domain. Residues alanine 112–aspartate 115 and glycine 167–threonine 175 each bind GTP. Cysteine 248, cysteine 253, histidine 255, and cysteine 261 together coordinate Zn(2+).

This sequence belongs to the TRAFAC class YlqF/YawG GTPase family. RsgA subfamily. In terms of assembly, monomer. Associates with 30S ribosomal subunit, binds 16S rRNA. The cofactor is Zn(2+).

The protein localises to the cytoplasm. Its function is as follows. One of several proteins that assist in the late maturation steps of the functional core of the 30S ribosomal subunit. Helps release RbfA from mature subunits. May play a role in the assembly of ribosomal proteins into the subunit. Circularly permuted GTPase that catalyzes slow GTP hydrolysis, GTPase activity is stimulated by the 30S ribosomal subunit. This chain is Small ribosomal subunit biogenesis GTPase RsgA 1, found in Lactiplantibacillus plantarum (strain ATCC BAA-793 / NCIMB 8826 / WCFS1) (Lactobacillus plantarum).